Here is a 309-residue protein sequence, read N- to C-terminus: tRNA uridine(34) hydroxylase (309 aa).

One can recognise a Rhodanese domain in the interval 137-232 (RGDEVVFFDG…YGEKYGDKGL (96 aa)). The active-site Cysteine persulfide intermediate is Cys192.

The protein belongs to the TrhO family.

It carries out the reaction uridine(34) in tRNA + AH2 + O2 = 5-hydroxyuridine(34) in tRNA + A + H2O. In terms of biological role, catalyzes oxygen-dependent 5-hydroxyuridine (ho5U) modification at position 34 in tRNAs. The chain is tRNA uridine(34) hydroxylase from Corynebacterium jeikeium (strain K411).